The following is a 376-amino-acid chain: 23S rRNA (uracil(747)-C(5))-methyltransferase RlmC (376 aa).

Residues Cys-3, Cys-11, Cys-14, and Cys-88 each contribute to the [4Fe-4S] cluster site. S-adenosyl-L-methionine is bound by residues Gln-213, Phe-242, Glu-263, and Asn-308. Cys-335 (nucleophile) is an active-site residue.

It belongs to the class I-like SAM-binding methyltransferase superfamily. RNA M5U methyltransferase family. RlmC subfamily.

It carries out the reaction uridine(747) in 23S rRNA + S-adenosyl-L-methionine = 5-methyluridine(747) in 23S rRNA + S-adenosyl-L-homocysteine + H(+). Functionally, catalyzes the formation of 5-methyl-uridine at position 747 (m5U747) in 23S rRNA. This chain is 23S rRNA (uracil(747)-C(5))-methyltransferase RlmC, found in Vibrio vulnificus (strain YJ016).